The following is a 263-amino-acid chain: Indole-3-glycerol phosphate synthase (263 aa).

This sequence belongs to the TrpC family.

The enzyme catalyses 1-(2-carboxyphenylamino)-1-deoxy-D-ribulose 5-phosphate + H(+) = (1S,2R)-1-C-(indol-3-yl)glycerol 3-phosphate + CO2 + H2O. The protein operates within amino-acid biosynthesis; L-tryptophan biosynthesis; L-tryptophan from chorismate: step 4/5. This chain is Indole-3-glycerol phosphate synthase, found in Acidithiobacillus ferrooxidans (strain ATCC 23270 / DSM 14882 / CIP 104768 / NCIMB 8455) (Ferrobacillus ferrooxidans (strain ATCC 23270)).